Reading from the N-terminus, the 79-residue chain is Small ribosomal subunit protein bS18 (79 aa).

The protein belongs to the bacterial ribosomal protein bS18 family. As to quaternary structure, part of the 30S ribosomal subunit. Forms a tight heterodimer with protein bS6.

Functionally, binds as a heterodimer with protein bS6 to the central domain of the 16S rRNA, where it helps stabilize the platform of the 30S subunit. This is Small ribosomal subunit protein bS18 from Pseudarthrobacter chlorophenolicus (strain ATCC 700700 / DSM 12829 / CIP 107037 / JCM 12360 / KCTC 9906 / NCIMB 13794 / A6) (Arthrobacter chlorophenolicus).